A 116-amino-acid chain; its full sequence is NADH-ubiquinone oxidoreductase chain 3 (116 aa).

The next 3 membrane-spanning stretches (helical) occupy residues 3 to 23 (LFATILIIMTTLSLVLALVSF), 56 to 76 (FFLVAVLFPLFDLEIALLLPL), and 88 to 108 (TLFWAMTVLILLTLGLAYEWA).

The protein belongs to the complex I subunit 3 family. In terms of assembly, core subunit of respiratory chain NADH dehydrogenase (Complex I) which is composed of 45 different subunits.

The protein resides in the mitochondrion inner membrane. It carries out the reaction a ubiquinone + NADH + 5 H(+)(in) = a ubiquinol + NAD(+) + 4 H(+)(out). In terms of biological role, core subunit of the mitochondrial membrane respiratory chain NADH dehydrogenase (Complex I) which catalyzes electron transfer from NADH through the respiratory chain, using ubiquinone as an electron acceptor. Essential for the catalytic activity of complex I. This Danio rerio (Zebrafish) protein is NADH-ubiquinone oxidoreductase chain 3 (mt-nd3).